Consider the following 102-residue polypeptide: Large ribosomal subunit protein uL23 (102 aa).

This sequence belongs to the universal ribosomal protein uL23 family. As to quaternary structure, part of the 50S ribosomal subunit. Contacts protein L29, and trigger factor when it is bound to the ribosome.

Functionally, one of the early assembly proteins it binds 23S rRNA. One of the proteins that surrounds the polypeptide exit tunnel on the outside of the ribosome. Forms the main docking site for trigger factor binding to the ribosome. The polypeptide is Large ribosomal subunit protein uL23 (Methylobacillus flagellatus (strain ATCC 51484 / DSM 6875 / VKM B-1610 / KT)).